The sequence spans 324 residues: Ribose-phosphate pyrophosphokinase (324 aa).

ATP-binding positions include asparagine 45 to glutamate 47 and arginine 104 to glutamine 105. Residues histidine 138 and aspartate 178 each contribute to the Mg(2+) site. Residue lysine 201 is part of the active site. Residues arginine 203, aspartate 229, and aspartate 233–threonine 237 contribute to the D-ribose 5-phosphate site.

Belongs to the ribose-phosphate pyrophosphokinase family. Class I subfamily. In terms of assembly, homohexamer. It depends on Mg(2+) as a cofactor.

It is found in the cytoplasm. The catalysed reaction is D-ribose 5-phosphate + ATP = 5-phospho-alpha-D-ribose 1-diphosphate + AMP + H(+). Its pathway is metabolic intermediate biosynthesis; 5-phospho-alpha-D-ribose 1-diphosphate biosynthesis; 5-phospho-alpha-D-ribose 1-diphosphate from D-ribose 5-phosphate (route I): step 1/1. Involved in the biosynthesis of the central metabolite phospho-alpha-D-ribosyl-1-pyrophosphate (PRPP) via the transfer of pyrophosphoryl group from ATP to 1-hydroxyl of ribose-5-phosphate (Rib-5-P). The sequence is that of Ribose-phosphate pyrophosphokinase from Streptomyces coelicolor (strain ATCC BAA-471 / A3(2) / M145).